Consider the following 149-residue polypeptide: SsrA-binding protein (149 aa).

Positions 121-149 are disordered; that stretch reads GKGEHDKRDTIKDREGKREVERAMKSRSR.

Belongs to the SmpB family.

Its subcellular location is the cytoplasm. Its function is as follows. Required for rescue of stalled ribosomes mediated by trans-translation. Binds to transfer-messenger RNA (tmRNA), required for stable association of tmRNA with ribosomes. tmRNA and SmpB together mimic tRNA shape, replacing the anticodon stem-loop with SmpB. tmRNA is encoded by the ssrA gene; the 2 termini fold to resemble tRNA(Ala) and it encodes a 'tag peptide', a short internal open reading frame. During trans-translation Ala-aminoacylated tmRNA acts like a tRNA, entering the A-site of stalled ribosomes, displacing the stalled mRNA. The ribosome then switches to translate the ORF on the tmRNA; the nascent peptide is terminated with the 'tag peptide' encoded by the tmRNA and targeted for degradation. The ribosome is freed to recommence translation, which seems to be the essential function of trans-translation. In Polaromonas sp. (strain JS666 / ATCC BAA-500), this protein is SsrA-binding protein.